A 257-amino-acid polypeptide reads, in one-letter code: MLRVAWRTLSLIRTRAVTQVLVPGLPGGGSAKFPFNQWGLQPRSLLLQAARGYVVRKPAQSRLDDDPPPSTLLKDYQNVPGIEKVDDVVKRLLSLEMANKKEMLKIKQEQFMKKIVANPEDTRSLEARIIALSVKIRSYEEHLEKHRKDKAHKRYLLMSIDQRKKMLKNLRNTNYDVFEKICWGLGIEYTFPPLYYRRAHRRFVTKKALCIRVFQETQKLKKRRRALKAAAAAQKQAKRRNPDSPAKAIPKTLKDSQ.

Residues 1-57 (MLRVAWRTLSLIRTRAVTQVLVPGLPGGGSAKFPFNQWGLQPRSLLLQAARGYVVRK) constitute a mitochondrion transit peptide. The tract at residues 225–257 (RALKAAAAAQKQAKRRNPDSPAKAIPKTLKDSQ) is disordered.

This sequence belongs to the universal ribosomal protein uS15 family. As to quaternary structure, component of the mitochondrial small ribosomal subunit (mt-SSU). Mature mammalian 55S mitochondrial ribosomes consist of a small (28S) and a large (39S) subunit. The 28S small subunit contains a 12S ribosomal RNA (12S mt-rRNA) and 30 different proteins. The 39S large subunit contains a 16S rRNA (16S mt-rRNA), a copy of mitochondrial valine transfer RNA (mt-tRNA(Val)), which plays an integral structural role, and 52 different proteins. Interacts with METTL17.

Its subcellular location is the mitochondrion matrix. This chain is Small ribosomal subunit protein uS15m (MRPS15), found in Homo sapiens (Human).